Reading from the N-terminus, the 241-residue chain is Uridylate kinase (241 aa).

Residue 9–10 (GS) coordinates ATP. A UMP-binding site is contributed by Gly44. The ATP site is built by Gly45 and Arg49. UMP is bound by residues Asp66 and 114-120 (IMPGQTT). Positions 140, 146, and 149 each coordinate ATP.

Belongs to the UMP kinase family. In terms of assembly, homohexamer.

It is found in the cytoplasm. The enzyme catalyses UMP + ATP = UDP + ADP. The protein operates within pyrimidine metabolism; CTP biosynthesis via de novo pathway; UDP from UMP (UMPK route): step 1/1. With respect to regulation, inhibited by UTP. Catalyzes the reversible phosphorylation of UMP to UDP. This is Uridylate kinase from Haloquadratum walsbyi (strain DSM 16790 / HBSQ001).